The primary structure comprises 95 residues: Integration host factor subunit beta (95 aa).

It belongs to the bacterial histone-like protein family. Heterodimer of an alpha and a beta chain.

Its function is as follows. This protein is one of the two subunits of integration host factor, a specific DNA-binding protein that functions in genetic recombination as well as in transcriptional and translational control. The chain is Integration host factor subunit beta from Klebsiella pneumoniae (strain 342).